A 168-amino-acid polypeptide reads, in one-letter code: Cyclic pyranopterin monophosphate synthase (168 aa).

Residues 81–83 (LCH) and 117–118 (ME) each bind substrate. Residue D132 is part of the active site.

It belongs to the MoaC family. Homohexamer; trimer of dimers.

It catalyses the reaction (8S)-3',8-cyclo-7,8-dihydroguanosine 5'-triphosphate = cyclic pyranopterin phosphate + diphosphate. It participates in cofactor biosynthesis; molybdopterin biosynthesis. Catalyzes the conversion of (8S)-3',8-cyclo-7,8-dihydroguanosine 5'-triphosphate to cyclic pyranopterin monophosphate (cPMP). The chain is Cyclic pyranopterin monophosphate synthase from Deinococcus radiodurans (strain ATCC 13939 / DSM 20539 / JCM 16871 / CCUG 27074 / LMG 4051 / NBRC 15346 / NCIMB 9279 / VKM B-1422 / R1).